The chain runs to 134 residues: uncharacterized protein (134 aa).

Positions 1–16 are cleaved as a signal peptide; it reads MAKAVALLLAAIAASA.

This is an uncharacterized protein from Oryza sativa subsp. indica (Rice).